Reading from the N-terminus, the 249-residue chain is Probable transcriptional regulatory protein LIC_12886 (249 aa).

The protein belongs to the TACO1 family.

It is found in the cytoplasm. This chain is Probable transcriptional regulatory protein LIC_12886, found in Leptospira interrogans serogroup Icterohaemorrhagiae serovar copenhageni (strain Fiocruz L1-130).